A 355-amino-acid polypeptide reads, in one-letter code: UDP-N-acetylglucosamine--N-acetylmuramyl-(pentapeptide) pyrophosphoryl-undecaprenol N-acetylglucosamine transferase (355 aa).

UDP-N-acetyl-alpha-D-glucosamine contacts are provided by residues 15 to 17 (TGG), N127, R163, S191, I244, 263 to 268 (ALTVSE), and Q288.

The protein belongs to the glycosyltransferase 28 family. MurG subfamily.

It localises to the cell inner membrane. The catalysed reaction is di-trans,octa-cis-undecaprenyl diphospho-N-acetyl-alpha-D-muramoyl-L-alanyl-D-glutamyl-meso-2,6-diaminopimeloyl-D-alanyl-D-alanine + UDP-N-acetyl-alpha-D-glucosamine = di-trans,octa-cis-undecaprenyl diphospho-[N-acetyl-alpha-D-glucosaminyl-(1-&gt;4)]-N-acetyl-alpha-D-muramoyl-L-alanyl-D-glutamyl-meso-2,6-diaminopimeloyl-D-alanyl-D-alanine + UDP + H(+). It functions in the pathway cell wall biogenesis; peptidoglycan biosynthesis. Functionally, cell wall formation. Catalyzes the transfer of a GlcNAc subunit on undecaprenyl-pyrophosphoryl-MurNAc-pentapeptide (lipid intermediate I) to form undecaprenyl-pyrophosphoryl-MurNAc-(pentapeptide)GlcNAc (lipid intermediate II). This chain is UDP-N-acetylglucosamine--N-acetylmuramyl-(pentapeptide) pyrophosphoryl-undecaprenol N-acetylglucosamine transferase, found in Salmonella paratyphi B (strain ATCC BAA-1250 / SPB7).